A 372-amino-acid polypeptide reads, in one-letter code: Cyclic GMP-AMP synthase-like receptor (372 aa).

Position 68 (threonine 68) interacts with GTP. Residues serine 70 and 82–84 (EFD) each bind ATP. Positions 82, 84, and 190 each coordinate Mg(2+). GTP is bound by residues aspartate 190 and 236 to 243 (LVCAPYWE). Residues 240-243 (PYWE), lysine 261, and 274-278 (SYTIK) contribute to the ATP site.

This sequence belongs to the mab-21 family. The cofactor is Mg(2+). It depends on Mn(2+) as a cofactor.

The catalysed reaction is GTP + ATP = 3',2'-cGAMP + 2 diphosphate. It catalyses the reaction GTP + ATP = pppA(2'-5')pG + diphosphate. It carries out the reaction pppA(2'-5')pG = 3',2'-cGAMP + diphosphate. Its activity is regulated as follows. The enzyme activity is specifically activated by double-stranded RNA (dsRNA). Functionally, nucleotidyltransferase that catalyzes the formation of cyclic GMP-AMP (3',2'-cGAMP) from ATP and GTP and plays a key role in innate immunity. Synthesizes 3',2'-cGAMP in a two-step reaction through production of the linear intermediate pppA(2'-5')pG. Acts as a key sensor of double-stranded RNA (dsRNA), the presence of dsRNA in the cytoplasm being a danger signal that triggers the immune responses. Directly binds dsRNA longer than 15 bp, activating the nucleotidyltransferase activity, leading to synthesis of 3',2'-cGAMP, a second messenger that binds to and activates Sting, thereby triggering the antiviral immune response via activation of the NF-kappa-B transcription factor Rel (Relish). The chain is Cyclic GMP-AMP synthase-like receptor from Drosophila eugracilis (Fruit fly).